The chain runs to 308 residues: Porphobilinogen deaminase (308 aa).

The residue at position 241 (C241) is an S-(dipyrrolylmethanemethyl)cysteine.

The protein belongs to the HMBS family. In terms of assembly, monomer. The cofactor is dipyrromethane.

It catalyses the reaction 4 porphobilinogen + H2O = hydroxymethylbilane + 4 NH4(+). The protein operates within porphyrin-containing compound metabolism; protoporphyrin-IX biosynthesis; coproporphyrinogen-III from 5-aminolevulinate: step 2/4. Its function is as follows. Tetrapolymerization of the monopyrrole PBG into the hydroxymethylbilane pre-uroporphyrinogen in several discrete steps. The sequence is that of Porphobilinogen deaminase from Staphylococcus aureus (strain Mu50 / ATCC 700699).